A 110-amino-acid chain; its full sequence is Small ribosomal subunit protein eS25 (110 aa).

The disordered stretch occupies residues 1 to 37 (MGGASKKPISTMEKRLKKEAEKQQKAEEKKKGPSKTG). Over residues 12–37 (MEKRLKKEAEKQQKAEEKKKGPSKTG) the composition is skewed to basic and acidic residues.

Belongs to the eukaryotic ribosomal protein eS25 family.

In Saccharolobus solfataricus (strain ATCC 35092 / DSM 1617 / JCM 11322 / P2) (Sulfolobus solfataricus), this protein is Small ribosomal subunit protein eS25 (rps25e).